Reading from the N-terminus, the 196-residue chain is uncharacterized protein (196 aa).

The protein to H.influenzae HI_0431.

This is an uncharacterized protein from Escherichia coli (strain K12).